The following is a 202-amino-acid chain: Glycerol-3-phosphate acyltransferase (202 aa).

A run of 4 helical transmembrane segments spans residues 11 to 31, 87 to 107, 116 to 136, and 158 to 178; these read ALIA…GLIL, PALA…WLGF, FIGV…AIWL, and VILW…LAAL.

Belongs to the PlsY family. Probably interacts with PlsX.

It localises to the cell inner membrane. It carries out the reaction an acyl phosphate + sn-glycerol 3-phosphate = a 1-acyl-sn-glycero-3-phosphate + phosphate. It participates in lipid metabolism; phospholipid metabolism. Catalyzes the transfer of an acyl group from acyl-phosphate (acyl-PO(4)) to glycerol-3-phosphate (G3P) to form lysophosphatidic acid (LPA). This enzyme utilizes acyl-phosphate as fatty acyl donor, but not acyl-CoA or acyl-ACP. The protein is Glycerol-3-phosphate acyltransferase of Methylorubrum populi (strain ATCC BAA-705 / NCIMB 13946 / BJ001) (Methylobacterium populi).